An 873-amino-acid polypeptide reads, in one-letter code: K(+)/H(+) antiporter 1 (873 aa).

Over 1-23 (MANTVGGILSGVNPFHYNSSSPL) the chain is Extracellular. A helical transmembrane segment spans residues 24–44 (TLFLFQACLILLVCNLIHIPF). Topologically, residues 45 to 51 (SMMRQPK) are cytoplasmic. A helical membrane pass occupies residues 52 to 72 (VISEVISGVILGPTIFGQIPN). Residues 73–82 (YTNTIFPTSS) are Extracellular-facing. The chain crosses the membrane as a helical span at residues 83–103 (IPGLNLVANLGIILFMFFLGL). Over 104 to 116 (EVDIAFIKKHLKK) the chain is Cytoplasmic. Residues 117 to 137 (ALVIGIVTLAVPFGFGCLLAI) traverse the membrane as a helical segment. Over 138 to 154 (PLFHTYANKTEGERHIK) the chain is Extracellular. The chain crosses the membrane as a helical span at residues 155-175 (FSVFMVFIAVSISVTAFPVLC). The Cytoplasmic segment spans residues 176 to 188 (RILNELRLIKDRA). Residues 189–209 (GIVVLAAGIINDIMGWILLAL) traverse the membrane as a helical segment. The Extracellular portion of the chain corresponds to 210 to 220 (SIILSSAEGSP). A helical transmembrane segment spans residues 221–241 (VNTVYILLITFAWFLIYFFPL). The Cytoplasmic segment spans residues 242 to 267 (KYLLRWVLIRTHELDRSKPSPLATMC). A helical membrane pass occupies residues 268-288 (ILFIMFISAYFTDIIGVHPIF). At 289–316 (GAFIAGLVVPRDDHYVVKLTERMEDIPN) the chain is on the extracellular side. A helical transmembrane segment spans residues 317 to 337 (IVFIPIYFAVAGLNVDLTLLN). The Cytoplasmic portion of the chain corresponds to 338 to 341 (EGRD). The helical transmembrane segment at 342–362 (WGYVFATIGIAIFTKIISGTL) threads the bilayer. The Extracellular portion of the chain corresponds to 363-375 (TAKLTGLFWREAT). The chain crosses the membrane as a helical span at residues 376–396 (AAGVLMSCKGIVEIVVLTVGL). Residues 397–404 (NAGIISRK) are Cytoplasmic-facing. A helical transmembrane segment spans residues 405-425 (IFGMFVLMALVSTFVTTPLTQ). Over 426–726 (LVYPDSYRDG…DRFKRKRFNL (301 aa)) the chain is Extracellular. Phosphoserine is present on Ser557. Lys562 participates in a covalent cross-link: Glycyl lysine isopeptide (Lys-Gly) (interchain with G-Cter in ubiquitin). A helical transmembrane segment spans residues 727 to 747 (LLPKPYLTQSDYLGLYLLLLI). Residues 748 to 873 (CYRDGYNNDN…TLIVHHFSSE (126 aa)) are Cytoplasmic-facing.

The protein belongs to the monovalent cation:proton antiporter 2 (CPA2) transporter (TC 2.A.37) family.

The protein localises to the membrane. Functionally, potassium-proton antiport. In Saccharomyces cerevisiae (strain ATCC 204508 / S288c) (Baker's yeast), this protein is K(+)/H(+) antiporter 1 (KHA1).